Consider the following 205-residue polypeptide: Ribosomal RNA small subunit methyltransferase G (205 aa).

Residues glycine 66, phenylalanine 71, 119-120 (IE), and arginine 135 contribute to the S-adenosyl-L-methionine site.

Belongs to the methyltransferase superfamily. RNA methyltransferase RsmG family.

The protein resides in the cytoplasm. The enzyme catalyses guanosine(527) in 16S rRNA + S-adenosyl-L-methionine = N(7)-methylguanosine(527) in 16S rRNA + S-adenosyl-L-homocysteine. Functionally, specifically methylates the N7 position of guanine in position 527 of 16S rRNA. This Rhizobium leguminosarum bv. trifolii (strain WSM2304) protein is Ribosomal RNA small subunit methyltransferase G.